The following is a 378-amino-acid chain: Cobalt-precorrin-5B C(1)-methyltransferase (378 aa).

This sequence belongs to the CbiD family.

It catalyses the reaction Co-precorrin-5B + S-adenosyl-L-methionine = Co-precorrin-6A + S-adenosyl-L-homocysteine. The protein operates within cofactor biosynthesis; adenosylcobalamin biosynthesis; cob(II)yrinate a,c-diamide from sirohydrochlorin (anaerobic route): step 6/10. Its function is as follows. Catalyzes the methylation of C-1 in cobalt-precorrin-5B to form cobalt-precorrin-6A. The polypeptide is Cobalt-precorrin-5B C(1)-methyltransferase (Thermoplasma volcanium (strain ATCC 51530 / DSM 4299 / JCM 9571 / NBRC 15438 / GSS1)).